The primary structure comprises 428 residues: UPF0229 protein YeaH (428 aa).

The span at 78-90 (GNDHFIQNDRIER) shows a compositional bias: basic and acidic residues. Residues 78-111 (GNDHFIQNDRIERPQGGGGGGSGSGQGQASQDGE) form a disordered region. Residues 92 to 103 (QGGGGGGSGSGQ) are compositionally biased toward gly residues.

This sequence belongs to the UPF0229 family.

This Salmonella heidelberg (strain SL476) protein is UPF0229 protein YeaH.